A 226-amino-acid polypeptide reads, in one-letter code: Ras-related protein Rab-32 (226 aa).

Ala-2 carries the N-acetylalanine modification. Residues Val-38, Gly-39, Lys-40, Thr-41, Ser-42, Ser-53, Gln-54, Tyr-56, and Thr-59 each contribute to the GTP site. Mg(2+) is bound at residue Thr-41. Positions 50-64 (QLFSQHYRATIGVDF) match the Switch 1 motif. Thr-59 provides a ligand contact to Mg(2+). Ser-73 is subject to Phosphoserine. Residue Asp-83 participates in Mg(2+) binding. GTP is bound by residues Gly-86, Asn-145, Lys-146, Asp-148, Ala-177, and Lys-178. A Switch 2 motif is present at residues 86–99 (GQERFGNMTRVYYK). Residues 180 to 199 (NINIDEAARFLVENILANHQ) are PKA-RII subunit binding domain. The segment at 202–226 (PSEENDGRIKLDEETMKKENKSHCC) is disordered. The segment covering 206-226 (NDGRIKLDEETMKKENKSHCC) has biased composition (basic and acidic residues). Residues Cys-225 and Cys-226 are each lipidated (S-geranylgeranyl cysteine).

Belongs to the small GTPase superfamily. Rab family. As to quaternary structure, interacts with ANKRD27. A decreased interaction with ANKRD27 seen in the presence of SGSM2. Interacts with LRRK2 (via N-terminus); this interaction results in stimulation of RAB10 phosphorylation by LRRK2. The cofactor is Mg(2+).

It localises to the mitochondrion. It is found in the mitochondrion outer membrane. The protein resides in the cytoplasmic vesicle. Its subcellular location is the phagosome. The protein localises to the phagosome membrane. It localises to the melanosome. It is found in the melanosome membrane. It catalyses the reaction GTP + H2O = GDP + phosphate + H(+). With respect to regulation, regulated by guanine the nucleotide exchange factor (GEF) BLOC-3 complex composed of HPS1 and HPS4 which promote the exchange of bound GDP for free GTP. Regulated by the GTPase activating protein (GAP) SGSM2/RUTBC1 which increases the GTP hydrolysis activity. Inhibited by GDP dissociation inhibitors (GDIs) which prevent Rab-GDP dissociation. Functionally, the small GTPases Rab are key regulators of intracellular membrane trafficking, from the formation of transport vesicles to their fusion with membranes. Rabs cycle between an inactive GDP-bound form and an active GTP-bound form that is able to recruit to membranes different set of downstream effectors directly responsible for vesicle formation, movement, tethering and fusion. Also acts as an A-kinase anchoring protein by binding to the type II regulatory subunit of protein kinase A and anchoring it to the mitochondrion. Also involved in synchronization of mitochondrial fission. Plays a role in the maturation of phagosomes that engulf pathogens, such as S.aureus and M.tuberculosis. Plays an important role in the control of melanin production and melanosome biogenesis. In concert with RAB38, regulates the proper trafficking of melanogenic enzymes TYR, TYRP1 and DCT/TYRP2 to melanosomes in melanocytes. Stimulates phosphorylation of RAB10 'Thr-73' by LRRK2. The polypeptide is Ras-related protein Rab-32 (RAB32) (Sus scrofa (Pig)).